Here is a 215-residue protein sequence, read N- to C-terminus: Pyrrolidone-carboxylate peptidase (215 aa).

Active-site residues include Glu-80, Cys-143, and His-167.

This sequence belongs to the peptidase C15 family. In terms of assembly, homotetramer.

Its subcellular location is the cytoplasm. The enzyme catalyses Release of an N-terminal pyroglutamyl group from a polypeptide, the second amino acid generally not being Pro.. Its function is as follows. Removes 5-oxoproline from various penultimate amino acid residues except L-proline. This chain is Pyrrolidone-carboxylate peptidase, found in Bacillus cereus (strain ATCC 14579 / DSM 31 / CCUG 7414 / JCM 2152 / NBRC 15305 / NCIMB 9373 / NCTC 2599 / NRRL B-3711).